The chain runs to 396 residues: Tryptophan synthase beta chain (396 aa).

K88 is subject to N6-(pyridoxal phosphate)lysine.

It belongs to the TrpB family. As to quaternary structure, tetramer of two alpha and two beta chains. Pyridoxal 5'-phosphate is required as a cofactor.

The catalysed reaction is (1S,2R)-1-C-(indol-3-yl)glycerol 3-phosphate + L-serine = D-glyceraldehyde 3-phosphate + L-tryptophan + H2O. It functions in the pathway amino-acid biosynthesis; L-tryptophan biosynthesis; L-tryptophan from chorismate: step 5/5. In terms of biological role, the beta subunit is responsible for the synthesis of L-tryptophan from indole and L-serine. The sequence is that of Tryptophan synthase beta chain from Leptospira biflexa serovar Patoc (strain Patoc 1 / Ames).